The primary structure comprises 87 residues: MKKRFTEQQIIGFLKEAEAGMPVKELCRKHGFSDASFYTWRAKFGGMEVSEARRLKDLEVENARLKKLLAEAMLDMEALKVVVKGKP.

This sequence belongs to the transposase 8 family.

The protein is Insertion element IS407 uncharacterized 10.0 kDa protein of Burkholderia multivorans (strain ATCC 17616 / 249).